The following is a 376-amino-acid chain: Rhodopsin (376 aa).

The Extracellular portion of the chain corresponds to M1 to M52. N-linked (GlcNAc...) asparagine glycosylation occurs at N23. A helical transmembrane segment spans residues Y53 to V77. The Cytoplasmic segment spans residues F78 to N89. A helical transmembrane segment spans residues L90–V112. The Extracellular segment spans residues T113 to C126. C126 and C203 form a disulfide bridge. The chain crosses the membrane as a helical span at residues Q127–F149. Positions D150 to Y152 match the 'Ionic lock' involved in activated form stabilization motif. Over D150–K168 the chain is Cytoplasmic. A helical transmembrane segment spans residues A169–F189. The Extracellular segment spans residues G190–S216. N-linked (GlcNAc...) asparagine glycosylation is present at N199. Residues Y217 to V237 form a helical membrane-spanning segment. Residues S238–K278 are Cytoplasmic-facing. The chain crosses the membrane as a helical span at residues I279–V300. Topologically, residues G301 to V311 are extracellular. Residues Y312 to I333 form a helical membrane-spanning segment. K321 carries the post-translational modification N6-(retinylidene)lysine. At S334–A376 the chain is on the cytoplasmic side. A disordered region spans residues T353 to A376.

It belongs to the G-protein coupled receptor 1 family. Opsin subfamily. As to quaternary structure, homodimer. Interacts with GNAQ. Contains one covalently linked retinal chromophore. Detected on rhabdomere membranes on photoreceptor cells in the retina (at protein level).

Its subcellular location is the cell projection. It is found in the rhabdomere membrane. In terms of biological role, photoreceptor required for image-forming vision at low light intensity. Can use both retinal and 3-dehydroretinal as visual pigment. Light-induced isomerization of 11-cis to all-trans retinal triggers a conformational change that activates signaling via G-proteins. Signaling via GNAQ probably mediates the activation of phospholipase C. The sequence is that of Rhodopsin (RHO) from Procambarus clarkii (Red swamp crayfish).